A 267-amino-acid chain; its full sequence is Methyl-coenzyme M reductase II subunit gamma (267 aa).

Arg-123 is a binding site for coenzyme M.

It belongs to the methyl-coenzyme M reductase gamma subunit family. MCR is a hexamer of two alpha, two beta, and two gamma chains, forming a dimer of heterotrimers. Requires coenzyme F430 as cofactor.

The enzyme catalyses coenzyme B + methyl-coenzyme M = methane + coenzyme M-coenzyme B heterodisulfide. Its pathway is one-carbon metabolism; methyl-coenzyme M reduction; methane from methyl-coenzyme M: step 1/1. Its function is as follows. Component of the methyl-coenzyme M reductase (MCR) I that catalyzes the reductive cleavage of methyl-coenzyme M (CoM-S-CH3 or 2-(methylthio)ethanesulfonate) using coenzyme B (CoB or 7-mercaptoheptanoylthreonine phosphate) as reductant which results in the production of methane and the mixed heterodisulfide of CoB and CoM (CoM-S-S-CoB). This is the final step in methanogenesis. This chain is Methyl-coenzyme M reductase II subunit gamma (mrtG), found in Methanothermus fervidus (strain ATCC 43054 / DSM 2088 / JCM 10308 / V24 S).